A 177-amino-acid chain; its full sequence is Translation initiation factor IF-3 (177 aa).

The protein belongs to the IF-3 family. Monomer.

Its subcellular location is the cytoplasm. In terms of biological role, IF-3 binds to the 30S ribosomal subunit and shifts the equilibrium between 70S ribosomes and their 50S and 30S subunits in favor of the free subunits, thus enhancing the availability of 30S subunits on which protein synthesis initiation begins. In Nostoc punctiforme (strain ATCC 29133 / PCC 73102), this protein is Translation initiation factor IF-3.